A 496-amino-acid chain; its full sequence is Glutamate--cysteine ligase B, chloroplastic (496 aa).

The N-terminal 34 residues, 1-34 (MAVASRLAVARVAPDGGAAGRRRRRRGRPVVAVP), are a transit peptide targeting the chloroplast. Residues 14–53 (PDGGAAGRRRRRRGRPVVAVPTAAGRGRGRGGAVAASPPT) form a disordered region. Residues 29-38 (PVVAVPTAAG) show a composition bias toward low complexity. Cys-160 and Cys-380 are joined by a disulfide.

It belongs to the carboxylate-amine ligase family. Glutamate--cysteine ligase type 2 subfamily. In terms of assembly, homodimer or monomer when oxidized or reduced, respectively. Post-translationally, the Cys-160-Cys-380 disulfide bridge is known to modulate the enzyme activity according to the redox status. The oxidized form constitutes the active enzyme.

The protein resides in the plastid. It localises to the chloroplast. It carries out the reaction L-cysteine + L-glutamate + ATP = gamma-L-glutamyl-L-cysteine + ADP + phosphate + H(+). It functions in the pathway sulfur metabolism; glutathione biosynthesis; glutathione from L-cysteine and L-glutamate: step 1/2. The chain is Glutamate--cysteine ligase B, chloroplastic (GSH1-2) from Oryza sativa subsp. japonica (Rice).